A 64-amino-acid chain; its full sequence is Photosystem II reaction center protein J (64 aa).

The helical transmembrane segment at 35-55 threads the bilayer; that stretch reads LWLVATAGGIAVIFVLGIFFY.

The protein belongs to the PsbJ family. In terms of assembly, PSII is composed of 1 copy each of membrane proteins PsbA, PsbB, PsbC, PsbD, PsbE, PsbF, PsbH, PsbI, PsbJ, PsbK, PsbL, PsbM, PsbT, PsbX, PsbY, Psb30/Ycf12, peripheral proteins PsbO, CyanoQ (PsbQ), PsbU, PsbV and a large number of cofactors. It forms dimeric complexes.

It is found in the cellular thylakoid membrane. Functionally, one of the components of the core complex of photosystem II (PSII). PSII is a light-driven water:plastoquinone oxidoreductase that uses light energy to abstract electrons from H(2)O, generating O(2) and a proton gradient subsequently used for ATP formation. It consists of a core antenna complex that captures photons, and an electron transfer chain that converts photonic excitation into a charge separation. This is Photosystem II reaction center protein J from Prochlorococcus marinus (strain MIT 9515).